We begin with the raw amino-acid sequence, 332 residues long: Methionyl-tRNA formyltransferase (332 aa).

114–117 (SLLP) lines the (6S)-5,6,7,8-tetrahydrofolate pocket.

This sequence belongs to the Fmt family.

It carries out the reaction L-methionyl-tRNA(fMet) + (6R)-10-formyltetrahydrofolate = N-formyl-L-methionyl-tRNA(fMet) + (6S)-5,6,7,8-tetrahydrofolate + H(+). In terms of biological role, attaches a formyl group to the free amino group of methionyl-tRNA(fMet). The formyl group appears to play a dual role in the initiator identity of N-formylmethionyl-tRNA by promoting its recognition by IF2 and preventing the misappropriation of this tRNA by the elongation apparatus. This is Methionyl-tRNA formyltransferase from Corynebacterium aurimucosum (strain ATCC 700975 / DSM 44827 / CIP 107346 / CN-1) (Corynebacterium nigricans).